Consider the following 1207-residue polypeptide: DNA-directed RNA polymerase subunit beta' (1207 aa).

Zn(2+) contacts are provided by cysteine 60, cysteine 62, cysteine 75, and cysteine 78. Mg(2+)-binding residues include aspartate 450, aspartate 452, and aspartate 454. The Zn(2+) site is built by cysteine 819, cysteine 893, cysteine 900, and cysteine 903.

Belongs to the RNA polymerase beta' chain family. The RNAP catalytic core consists of 2 alpha, 1 beta, 1 beta' and 1 omega subunit. When a sigma factor is associated with the core the holoenzyme is formed, which can initiate transcription. Requires Mg(2+) as cofactor. Zn(2+) is required as a cofactor.

The enzyme catalyses RNA(n) + a ribonucleoside 5'-triphosphate = RNA(n+1) + diphosphate. Functionally, DNA-dependent RNA polymerase catalyzes the transcription of DNA into RNA using the four ribonucleoside triphosphates as substrates. The polypeptide is DNA-directed RNA polymerase subunit beta' (Streptococcus pyogenes serotype M12 (strain MGAS2096)).